Here is a 373-residue protein sequence, read N- to C-terminus: Chaperone protein DnaJ (373 aa).

Residues 5–70 form the J domain; the sequence is DYYELLEVDR…EKRALYDQYG (66 aa). The segment at 134–211 adopts a CR-type zinc-finger fold; that stretch reads GTQKEVHYSF…CSGKGYRIEK (78 aa). Zn(2+) contacts are provided by C147, C150, C163, C166, C185, C188, C199, and C202. 4 CXXCXGXG motif repeats span residues 147-154, 163-170, 185-192, and 199-206; these read CSACKGTG, CPECHGRG, CPRCHGQG, and CEECSGKG.

It belongs to the DnaJ family. In terms of assembly, homodimer. Zn(2+) is required as a cofactor.

It is found in the cytoplasm. Its function is as follows. Participates actively in the response to hyperosmotic and heat shock by preventing the aggregation of stress-denatured proteins and by disaggregating proteins, also in an autonomous, DnaK-independent fashion. Unfolded proteins bind initially to DnaJ; upon interaction with the DnaJ-bound protein, DnaK hydrolyzes its bound ATP, resulting in the formation of a stable complex. GrpE releases ADP from DnaK; ATP binding to DnaK triggers the release of the substrate protein, thus completing the reaction cycle. Several rounds of ATP-dependent interactions between DnaJ, DnaK and GrpE are required for fully efficient folding. Also involved, together with DnaK and GrpE, in the DNA replication of plasmids through activation of initiation proteins. The polypeptide is Chaperone protein DnaJ (Nitratiruptor sp. (strain SB155-2)).